The chain runs to 377 residues: 8-amino-7-oxononanoate synthase (377 aa).

Arg-13 serves as a coordination point for substrate. 100 to 101 (GY) serves as a coordination point for pyridoxal 5'-phosphate. His-125 provides a ligand contact to substrate. Pyridoxal 5'-phosphate-binding residues include Ser-171, His-199, and Thr-228. An N6-(pyridoxal phosphate)lysine modification is found at Lys-231. Thr-345 provides a ligand contact to substrate.

The protein belongs to the class-II pyridoxal-phosphate-dependent aminotransferase family. BioF subfamily. As to quaternary structure, homodimer. Pyridoxal 5'-phosphate is required as a cofactor.

The catalysed reaction is 6-carboxyhexanoyl-[ACP] + L-alanine + H(+) = (8S)-8-amino-7-oxononanoate + holo-[ACP] + CO2. It functions in the pathway cofactor biosynthesis; biotin biosynthesis. Catalyzes the decarboxylative condensation of pimeloyl-[acyl-carrier protein] and L-alanine to produce 8-amino-7-oxononanoate (AON), [acyl-carrier protein], and carbon dioxide. The polypeptide is 8-amino-7-oxononanoate synthase (Nitrosococcus oceani (strain ATCC 19707 / BCRC 17464 / JCM 30415 / NCIMB 11848 / C-107)).